Here is a 455-residue protein sequence, read N- to C-terminus: Glutamyl-tRNA reductase (455 aa).

Substrate is bound by residues 49-52 (TCNR), S109, 114-116 (ETQ), and Q120. The active-site Nucleophile is the C50. 189 to 194 (GAGKMG) provides a ligand contact to NADP(+).

This sequence belongs to the glutamyl-tRNA reductase family. In terms of assembly, homodimer.

It catalyses the reaction (S)-4-amino-5-oxopentanoate + tRNA(Glu) + NADP(+) = L-glutamyl-tRNA(Glu) + NADPH + H(+). It functions in the pathway porphyrin-containing compound metabolism; protoporphyrin-IX biosynthesis; 5-aminolevulinate from L-glutamyl-tRNA(Glu): step 1/2. Functionally, catalyzes the NADPH-dependent reduction of glutamyl-tRNA(Glu) to glutamate 1-semialdehyde (GSA). The protein is Glutamyl-tRNA reductase of Bacillus subtilis (strain 168).